A 161-amino-acid chain; its full sequence is V-type proton ATPase 16 kDa proteolipid subunit c 2 (161 aa).

Over 1–15 (MSYDLETAERAAYAP) the chain is Lumenal. A helical membrane pass occupies residues 16–36 (FFGYMGAASAQIFTVLGAAYG). The Cytoplasmic portion of the chain corresponds to 37 to 58 (TAKSAVGICSMGVMRPELIMKS). A helical transmembrane segment spans residues 59–79 (VIPVIMAGIIGIYGLVVAMVL). Residues 80–98 (KGKVTSASAGYDLNKGFAH) lie on the Lumenal side of the membrane. The helical transmembrane segment at 99-119 (LAAGLTCGLCGLGAGYAIGIV) threads the bilayer. At 120-137 (GDAGVRGTAQQPRLFVGM) the chain is on the cytoplasmic side. Residues 138-158 (ILILIFSEVLGLYGMIVALIL) form a helical membrane-spanning segment. Over 159–161 (GTS) the chain is Lumenal.

The protein belongs to the V-ATPase proteolipid subunit family. V-ATPase is a heteromultimeric enzyme made up of two complexes: the ATP-hydrolytic V1 complex and the proton translocation V0 complex. The V1 complex consists of three catalytic AB heterodimers that form a heterohexamer, three peripheral stalks each consisting of EG heterodimers, one central rotor including subunits D and F, and the regulatory subunits C and H. The proton translocation complex V0 consists of the proton transport subunit a, a ring of proteolipid subunits c9c'', rotary subunit d, subunits e and f, and the accessory subunits vah-19/Ac45 and vah-20/PRR. Expressed in the H-shaped excretory cell, rectum, and a pair of cells posterior to the anus.

The protein resides in the membrane. In terms of biological role, proton-conducting pore forming subunit of the V0 complex of vacuolar(H+)-ATPase (V-ATPase), a multisubunit enzyme composed of a peripheral complex (V1) that hydrolyzes ATP and a membrane integral complex (V0) that translocates protons. V-ATPase is responsible for acidifying and maintaining the pH of intracellular compartments and in some cell types, is targeted to the plasma membrane, where it is responsible for acidifying the extracellular environment. Involved in necrotic cell death. Required along with other vacuolar ATPase components for the removal of protein aggregates which form in immature oocytes in the distal gonad. This removal occurs as the oocytes mature and move to the proximal gonad, is triggered by the introduction of sperm through mating and occurs before fertilization. The introduction of sperm triggers V-ATPase accumulation in proximal oocytes and induces lysosomal acidification which leads to engulfing of protein aggregates by lysosomes and subsequent clearance of the aggregates. Lysosomal acidification also leads to changes in mitochondrial morphology and function. Mitochondria in distal immature oocytes are fragmented, produce high levels of reactive oxygen species (ROS) and have high membrane potential, indicative of metabolic inactivity. In contrast, mitochondria in proximal mature oocytes are tubular with lower ROS levels and membrane potential, indicative of an active metabolic state required for aggregate mobilization before clearance. The protein is V-type proton ATPase 16 kDa proteolipid subunit c 2 of Caenorhabditis elegans.